A 233-amino-acid chain; its full sequence is Probable 2-phosphosulfolactate phosphatase (233 aa).

Belongs to the ComB family. It depends on Mg(2+) as a cofactor.

It carries out the reaction (2R)-O-phospho-3-sulfolactate + H2O = (2R)-3-sulfolactate + phosphate. The chain is Probable 2-phosphosulfolactate phosphatase from Symbiobacterium thermophilum (strain DSM 24528 / JCM 14929 / IAM 14863 / T).